The primary structure comprises 440 residues: Proline--tRNA ligase (440 aa).

It belongs to the class-II aminoacyl-tRNA synthetase family. ProS type 2 subfamily. In terms of assembly, homodimer.

The protein localises to the cytoplasm. The enzyme catalyses tRNA(Pro) + L-proline + ATP = L-prolyl-tRNA(Pro) + AMP + diphosphate. In terms of biological role, catalyzes the attachment of proline to tRNA(Pro) in a two-step reaction: proline is first activated by ATP to form Pro-AMP and then transferred to the acceptor end of tRNA(Pro). The protein is Proline--tRNA ligase of Rhizobium leguminosarum bv. trifolii (strain WSM2304).